The sequence spans 2102 residues: Mediator of RNA polymerase II transcription subunit 13-like (2102 aa).

Disordered stretches follow at residues 304-335, 432-487, 514-587, 689-758, 776-819, and 947-1034; these read SYAG…EEAQ, QRAC…QPSL, VTSS…LDPL, SSAV…TTSL, NSDE…DLHQ, and SVVE…SSVE. A compositionally biased stretch (pro residues) spans 439–450; the sequence is GHPPSAGQPPQP. The span at 455–467 shows a compositional bias: basic and acidic residues; the sequence is KMAEKLEKGDKQQ. Positions 693 to 714 are enriched in acidic residues; sequence CDEDPEQESDPYAFEEGDEEFN. 2 stretches are compositionally biased toward basic and acidic residues: residues 715–737 and 794–804; these read FSDK…REDG and AEEKFGGKEPK. Residues 947–974 show a composition bias toward polar residues; sequence SVVEQEQSCTPQTHNTFMSNSAPPSNSG. Residues 979–990 show a composition bias toward low complexity; the sequence is PSPATPRISAPT. Residues 1015 to 1029 are compositionally biased toward polar residues; sequence SDLNSPASTPSTCRP. Short sequence motifs (LXXLL motif) lie at residues 1165–1169 and 1254–1258; these read LMLLL and LRMLL. Disordered regions lie at residues 1451–1574 and 1948–1983; these read LTQR…DGDS and NSPT…HDES. 3 stretches are compositionally biased toward low complexity: residues 1458-1467, 1476-1502, and 1522-1538; these read SSSQTSSSSS, TPTT…SSSS, and GAQG…QSAG. Polar residues predominate over residues 1542 to 1552; it reads DATSATSQPQV. The span at 1973 to 1983 shows a compositional bias: basic and acidic residues; that stretch reads GTDRMESHDES.

The protein belongs to the Mediator complex subunit 13 family. Component of the Mediator complex.

The protein localises to the nucleus. In terms of biological role, component of the Mediator complex, a coactivator involved in regulated gene transcription of nearly all RNA polymerase II-dependent genes. Mediator functions as a bridge to convey information from gene-specific regulatory proteins to the basal RNA polymerase II transcription machinery. Mediator is recruited to promoters by direct interactions with regulatory proteins and serves as a scaffold for the assembly of a functional preinitiation complex with RNA polymerase II and the general transcription factors. This Danio rerio (Zebrafish) protein is Mediator of RNA polymerase II transcription subunit 13-like.